The chain runs to 613 residues: Myosin light chain kinase 2, skeletal/cardiac muscle (613 aa).

A compositionally biased stretch (polar residues) spans 1-20 (MTTENGAVELGSQSLSTEQT). The disordered stretch occupies residues 1–168 (MTTENGAVEL…RGSPAFLHSP (168 aa)). Residues 32-55 (SEKEPSAPATEKDLSPPNAKKDPG) are compositionally biased toward basic and acidic residues. Residues 56-66 (APDPKNNPDPP) are compositionally biased toward pro residues. A compositionally biased stretch (basic and acidic residues) spans 67–83 (SLKKDPAKAPGPEKKGD). Gly residues predominate over residues 95-105 (SGEGDGGGGPA). Residues 106–122 (EGSEGPPAALPLPTATA) are compositionally biased toward low complexity. Residues 145-158 (KAGKKAAECREAGR) are compositionally biased toward basic and acidic residues. Ser161, Ser167, and Ser169 each carry phosphoserine. Residues 219 to 240 (EKKKEEAEKASGQAGQAKVQGD) form a disordered region. A Protein kinase domain is found at 302–557 (MNSKEALGGG…AEQCLAHPWL (256 aa)). Residues 308–316 (LGGGKFGAV) and Lys331 contribute to the ATP site. Catalysis depends on Asp423, which acts as the Proton acceptor. Thr462 is subject to Phosphothreonine. The calmodulin-binding stretch occupies residues 591 to 603 (IAVSAANRFKKIS).

Belongs to the protein kinase superfamily. CAMK Ser/Thr protein kinase family. In terms of assembly, may interact with centrin.

Its subcellular location is the cytoplasm. It catalyses the reaction L-seryl-[myosin light chain] + ATP = O-phospho-L-seryl-[myosin light chain] + ADP + H(+). It carries out the reaction L-threonyl-[myosin light chain] + ATP = O-phospho-L-threonyl-[myosin light chain] + ADP + H(+). Functionally, implicated in the level of global muscle contraction and cardiac function. Phosphorylates a specific serine in the N-terminus of a myosin light chain. This is Myosin light chain kinase 2, skeletal/cardiac muscle (Mylk2) from Mus musculus (Mouse).